The chain runs to 351 residues: Delta(7)-sterol 5(6)-desaturase (351 aa).

The next 3 membrane-spanning stretches (helical) occupy residues 88 to 108 (LSLF…VASF), 136 to 156 (GLGA…LELH), and 173 to 193 (VRLA…IYLL). The region spanning 180–305 (LFFILFTDFG…FTTLWDRLGG (126 aa)) is the Fatty acid hydroxylase domain. The Histidine box-1 motif lies at 194-198 (HRWLH). Residues 207–211 (HKKHH) carry the Histidine box-2 motif. Residues 237–257 (HLFPMLFPLHKVSYLVLFTFV) form a helical membrane-spanning segment. A Histidine box-3 motif is present at residues 282–286 (HTVHH).

Belongs to the sterol desaturase family. Fe cation serves as cofactor.

It is found in the endoplasmic reticulum membrane. The enzyme catalyses a Delta(7)-sterol + 2 Fe(II)-[cytochrome b5] + O2 + 2 H(+) = a Delta(5),Delta(7)-sterol + 2 Fe(III)-[cytochrome b5] + 2 H2O. It functions in the pathway steroid metabolism; ergosterol biosynthesis; ergosterol from zymosterol: step 3/5. Its function is as follows. Catalyzes the introduction of a C-5 double bond in the B ring of ergosterol. May contribute to the regulation of ergosterol biosynthesis. This chain is Delta(7)-sterol 5(6)-desaturase (ERG3), found in Eremothecium gossypii (strain ATCC 10895 / CBS 109.51 / FGSC 9923 / NRRL Y-1056) (Yeast).